We begin with the raw amino-acid sequence, 428 residues long: 3-phosphoshikimate 1-carboxyvinyltransferase (428 aa).

Residues lysine 22, serine 23, and arginine 27 each contribute to the 3-phosphoshikimate site. Lysine 22 contributes to the phosphoenolpyruvate binding site. Positions 94 and 122 each coordinate phosphoenolpyruvate. Residues serine 168, serine 169, glutamine 170, serine 196, aspartate 315, and lysine 342 each coordinate 3-phosphoshikimate. A phosphoenolpyruvate-binding site is contributed by glutamine 170. The active-site Proton acceptor is aspartate 315. Phosphoenolpyruvate contacts are provided by arginine 346, arginine 389, and lysine 414.

Belongs to the EPSP synthase family. As to quaternary structure, monomer.

The protein resides in the cytoplasm. It carries out the reaction 3-phosphoshikimate + phosphoenolpyruvate = 5-O-(1-carboxyvinyl)-3-phosphoshikimate + phosphate. Its pathway is metabolic intermediate biosynthesis; chorismate biosynthesis; chorismate from D-erythrose 4-phosphate and phosphoenolpyruvate: step 6/7. Functionally, catalyzes the transfer of the enolpyruvyl moiety of phosphoenolpyruvate (PEP) to the 5-hydroxyl of shikimate-3-phosphate (S3P) to produce enolpyruvyl shikimate-3-phosphate and inorganic phosphate. In Thiobacillus denitrificans (strain ATCC 25259 / T1), this protein is 3-phosphoshikimate 1-carboxyvinyltransferase.